Consider the following 193-residue polypeptide: Peptidyl-tRNA hydrolase (193 aa).

H17 contributes to the tRNA binding site. H22 acts as the Proton acceptor in catalysis. Residues F68, N70, and N116 each contribute to the tRNA site.

Belongs to the PTH family. In terms of assembly, monomer.

Its subcellular location is the cytoplasm. The catalysed reaction is an N-acyl-L-alpha-aminoacyl-tRNA + H2O = an N-acyl-L-amino acid + a tRNA + H(+). Its function is as follows. Hydrolyzes ribosome-free peptidyl-tRNAs (with 1 or more amino acids incorporated), which drop off the ribosome during protein synthesis, or as a result of ribosome stalling. In terms of biological role, catalyzes the release of premature peptidyl moieties from peptidyl-tRNA molecules trapped in stalled 50S ribosomal subunits, and thus maintains levels of free tRNAs and 50S ribosomes. This chain is Peptidyl-tRNA hydrolase, found in Xanthomonas campestris pv. campestris (strain ATCC 33913 / DSM 3586 / NCPPB 528 / LMG 568 / P 25).